Here is a 161-residue protein sequence, read N- to C-terminus: General odorant-binding protein 2 (161 aa).

The first 20 residues, 1–20 (MVNRLILMVVVVFITDSVMG), serve as a signal peptide directing secretion. Cystine bridges form between C39-C74, C70-C128, and C117-C137.

The protein belongs to the PBP/GOBP family. As to quaternary structure, homodimer. In terms of tissue distribution, olfactory tissue; expressed by the glia-like support cells that ensheathe the sensory neurons and line the base of the sensillum lumen.

Present in the aqueous fluid surrounding olfactory sensory dendrites and are thought to aid in the capture and transport of hydrophobic odorants into and through this fluid. This Manduca sexta (Tobacco hawkmoth) protein is General odorant-binding protein 2 (GOBP2).